Here is a 533-residue protein sequence, read N- to C-terminus: Probable G-protein coupled receptor Mth-like 14 (533 aa).

Positions 1-23 (MNLGHWNFLLALISLQTFFNASA) are cleaved as a signal peptide. N-linked (GlcNAc...) asparagine glycosylation is found at Asn-20, Asn-29, Asn-30, Asn-36, and Asn-47. Topologically, residues 24-242 (QISTVNNSSK…QVEEQIAFAK (219 aa)) are extracellular. The interval 86-108 (VQSPVDNPLDPADCSQREKYRKQ) is disordered. An intrachain disulfide couples Cys-120 to Cys-216. N-linked (GlcNAc...) asparagine glycans are attached at residues Asn-133, Asn-178, and Asn-206. A helical membrane pass occupies residues 243–263 (VVFVAVLMLISMPCLLLVSYL). At 264-279 (HMTLRLLRNLHGLSLS) the chain is on the cytoplasmic side. The chain crosses the membrane as a helical span at residues 280–300 (LMSLCLASGYFVHSVVHIYGI). The Extracellular segment spans residues 301–303 (PNQ). The helical transmembrane segment at 304–324 (GFIGYVIQFCILSYFFWYLCI) threads the bilayer. At 325-347 (CFNVLLNVWYKLPCCIQCSKSWA) the chain is on the cytoplasmic side. A helical membrane pass occupies residues 348 to 368 (TFNFACYAVFAFSGPATIVAL). Residues 369–395 (TVQKGLPGMPSYFLQGLTESIRDSQRY) lie on the Extracellular side of the membrane. The helical transmembrane segment at 396-416 (FIPPVSTILFLSFLLNIISFF) threads the bilayer. The Cytoplasmic portion of the chain corresponds to 417–451 (GFQRISGYAKAEKNIQERKCLFDQQKYEDVKKDAK). A helical transmembrane segment spans residues 452 to 472 (CVSLLGIIMVVSWLLEIITFY). Over 473 to 480 (SGSNSNYL) the chain is Extracellular. Residues 481-501 (ILCDMVNGLQGVWVLLIFLVV) form a helical membrane-spanning segment. Over 502-533 (RRRRTIILRWWYDRGSHEIEGTELQALSNSPT) the chain is Cytoplasmic.

It belongs to the G-protein coupled receptor 2 family. Mth subfamily.

It is found in the cell membrane. The sequence is that of Probable G-protein coupled receptor Mth-like 14 (mthl14) from Drosophila melanogaster (Fruit fly).